The following is a 574-amino-acid chain: Hyaluronan synthase 3 (574 aa).

The Cytoplasmic segment spans residues 1-15 (MPVSLSTALRVVGTS). The helical transmembrane segment at 16–36 (LFALAVLGGILAAYVTGYQFI) threads the bilayer. Residues 37–44 (HTEKHYLS) lie on the Extracellular side of the membrane. The helical transmembrane segment at 45 to 65 (FGLYGAILGLHLFIQSLFAFL) threads the bilayer. Over 66–398 (EHRRMRAERQ…NALWFHKHHL (333 aa)) the chain is Cytoplasmic. The chain crosses the membrane as a helical span at residues 399–419 (WMTYESVVTGFFPFFLIATVI). Residues 420-429 (QLFYRGRIWN) are Extracellular-facing. A helical transmembrane segment spans residues 430-450 (ILLFLLTVQLVGIIKATYACF). Topologically, residues 451 to 456 (LRGSAE) are cytoplasmic. The chain crosses the membrane as a helical span at residues 457 to 477 (MIFVSLYALLYMSSLLPAKMF). The Extracellular segment spans residues 478-494 (AIATINKSGWGTSGRRT). Residues 495–515 (IVVNFVGLLPVSVWAAVLLGG) form a helical membrane-spanning segment. Residues 516-530 (LAYTAYSQDLLSDTE) are Cytoplasmic-facing. Residues 531 to 551 (VAFLISGAVLYACYWVALLTL) traverse the membrane as a helical segment. The Extracellular segment spans residues 552-574 (YLAMVARRCGKRKEQCGLVFAEV).

This sequence belongs to the NodC/HAS family. It depends on Mg(2+) as a cofactor. In terms of processing, O-GlcNAcylation increases the hyaluronan synthase activity, HAS3 stability and its plasma membrane residence. The concentration of UDP-GlcNAc controls the level of O-GlcNAc modification.

The protein resides in the cell membrane. It localises to the golgi apparatus membrane. The protein localises to the golgi apparatus. It is found in the trans-Golgi network membrane. Its subcellular location is the cytoplasmic vesicle. It catalyses the reaction [hyaluronan](n) + UDP-N-acetyl-alpha-D-glucosamine = N-acetyl-beta-D-glucosaminyl-(1-&gt;4)-[hyaluronan](n) + UDP + H(+). It carries out the reaction N-acetyl-beta-D-glucosaminyl-(1-&gt;4)-[hyaluronan](n) + UDP-alpha-D-glucuronate = [hyaluronan](n+1) + UDP + H(+). The protein operates within glycan biosynthesis; hyaluronan biosynthesis. In terms of biological role, catalyzes the addition of GlcNAc or GlcUA monosaccharides to the nascent hyaluronan polymer. Therefore, it is essential to hyaluronan synthesis a major component of most extracellular matrices that has a structural role in tissues architectures and regulates cell adhesion, migration and differentiation. This is one of three isoenzymes responsible for cellular hyaluronan synthesis. The protein is Hyaluronan synthase 3 (HAS3) of Gallus gallus (Chicken).